Here is a 596-residue protein sequence, read N- to C-terminus: mRNA export factor mex67 (596 aa).

Phosphoserine is present on residues Ser-128, Ser-130, and Ser-133. LRR repeat units follow at residues 215 to 236, 241 to 262, and 263 to 282; these read DVIS…TTLA, KLLN…DPWS, and PKTK…PIVT. The LRRCT domain maps to 283–338; the sequence is TFANRAMDYQREMVSRFPKLRLLDGNSINSEIIASQSTVPFPVYQSFFDKVETEQI. The NTF2 domain occupies 338 to 499; the sequence is IVNSFLAAFF…ILIINDLLVI (162 aa). The 54-residue stretch at 543–596 folds into the TAP-C domain; that stretch reads DTRQQIVLKIKAETGLNDYYAHMCCEQNNWDYNSALASFLELKSRNVIPAEAFS.

Belongs to the NXF family. Interacts with mlo3 and rae1.

The protein localises to the nucleus. It is found in the cytoplasm. Its function is as follows. Involved in the export of mRNA from the nucleus to the cytoplasm. The sequence is that of mRNA export factor mex67 (mex67) from Schizosaccharomyces pombe (strain 972 / ATCC 24843) (Fission yeast).